Consider the following 317-residue polypeptide: (R)-citramalyl-CoA lyase (317 aa).

The region spanning 4–281 is the Pyruvate carboxyltransferase domain; that stretch reads VTIVDVAPRD…PTGIDLSALI (278 aa). Residue Arg12 coordinates substrate. Residues Asp13, His214, and His216 each contribute to the a divalent metal cation site. The active site involves Cys247. Asn256 contacts a divalent metal cation.

It belongs to the HMG-CoA lyase family. As to quaternary structure, homodimer. Mn(2+) serves as cofactor. The cofactor is Co(2+). It depends on Ni(2+) as a cofactor. Mg(2+) is required as a cofactor.

It carries out the reaction (3R)-citramalyl-CoA = pyruvate + acetyl-CoA. With respect to regulation, activated by dithioerythritol (DTE) (in vitro). Its function is as follows. Involved in the glyoxylate assimilation cycle used to regenerate acetyl-CoA and produce pyruvate as universal precursor for biosynthesis. Catalyzes the cleavage of (R)-citramalyl-CoA to yield acetyl-CoA and pyruvate. The sequence is that of (R)-citramalyl-CoA lyase (ccl) from Chloroflexus aurantiacus (strain ATCC 29366 / DSM 635 / J-10-fl).